We begin with the raw amino-acid sequence, 478 residues long: Adenosylhomocysteinase (478 aa).

Substrate-binding residues include threonine 57, aspartate 139, and glutamate 201. Residue 202 to 204 (TTT) coordinates NAD(+). Residues lysine 231 and aspartate 235 each coordinate substrate. Residues asparagine 236, 265–270 (GYGDVG), glutamate 288, asparagine 323, 344–346 (IGH), and asparagine 392 each bind NAD(+).

The protein belongs to the adenosylhomocysteinase family. The cofactor is NAD(+).

The protein localises to the cytoplasm. The enzyme catalyses S-adenosyl-L-homocysteine + H2O = L-homocysteine + adenosine. The protein operates within amino-acid biosynthesis; L-homocysteine biosynthesis; L-homocysteine from S-adenosyl-L-homocysteine: step 1/1. In terms of biological role, may play a key role in the regulation of the intracellular concentration of adenosylhomocysteine. The polypeptide is Adenosylhomocysteinase (Corynebacterium glutamicum (strain R)).